Reading from the N-terminus, the 63-residue chain is uncharacterized protein (63 aa).

A signal peptide spans 1 to 15; the sequence is MRNPVVWGMIYFAVG. Cys-16 carries the N-palmitoyl cysteine lipid modification. Residue Cys-16 is the site of S-diacylglycerol cysteine attachment. A helical transmembrane segment spans residues 34–56; sequence SILLMVFAAYNISISFKMFAFSF.

Its subcellular location is the cell membrane. This is an uncharacterized protein from Bacillus subtilis (strain 168).